An 836-amino-acid polypeptide reads, in one-letter code: Translation initiation factor IF-2 (836 aa).

The segment at 1 to 233 is disordered; that stretch reads MSDTDGKKPL…RSLAAMKRKQ (233 aa). Polar residues predominate over residues 18–27; the sequence is SGQVKQSFSH. Residues 50 to 60 are compositionally biased toward low complexity; it reads SGSSTTTSSPS. Positions 88 to 156 are enriched in basic and acidic residues; it reads KLREVEDAKR…AARRAEEAKR (69 aa). The span at 167–176 shows a compositional bias: low complexity; that stretch reads PAESRASAPP. The segment covering 185–206 has biased composition (basic and acidic residues); that stretch reads SRKEREREADRDRTTKKDDSRR. Residues 333–501 enclose the tr-type G domain; the sequence is PRPPIITIMG…NIALQAEILD (169 aa). A G1 region spans residues 342-349; the sequence is GHVDHGKT. GTP is bound at residue 342–349; it reads GHVDHGKT. The G2 stretch occupies residues 367 to 371; that stretch reads GITQH. Positions 389-392 are G3; it reads DTPG. Residues 389–393 and 443–446 contribute to the GTP site; these read DTPGH and NKID. Positions 443–446 are G4; that stretch reads NKID. Positions 479–481 are G5; sequence SAK.

Belongs to the TRAFAC class translation factor GTPase superfamily. Classic translation factor GTPase family. IF-2 subfamily.

The protein localises to the cytoplasm. Its function is as follows. One of the essential components for the initiation of protein synthesis. Protects formylmethionyl-tRNA from spontaneous hydrolysis and promotes its binding to the 30S ribosomal subunits. Also involved in the hydrolysis of GTP during the formation of the 70S ribosomal complex. The protein is Translation initiation factor IF-2 of Cereibacter sphaeroides (strain ATCC 17023 / DSM 158 / JCM 6121 / CCUG 31486 / LMG 2827 / NBRC 12203 / NCIMB 8253 / ATH 2.4.1.) (Rhodobacter sphaeroides).